The following is a 172-amino-acid chain: Peptidyl-prolyl cis-trans isomerase (172 aa).

One can recognise a PPIase cyclophilin-type domain in the interval 7–170 (FFDMSVGGQP…KKVVVEDCGQ (164 aa)).

It belongs to the cyclophilin-type PPIase family. Not glycosylated. As to expression, expressed in pollen.

It localises to the cytoplasm. It catalyses the reaction [protein]-peptidylproline (omega=180) = [protein]-peptidylproline (omega=0). Binds cyclosporin A (CsA). CsA mediates some of its effects via an inhibitory action on PPIase. In terms of biological role, PPIases accelerate the folding of proteins. It catalyzes the cis-trans isomerization of proline imidic peptide bonds in oligopeptides. This is Peptidyl-prolyl cis-trans isomerase (PCKR1) from Catharanthus roseus (Madagascar periwinkle).